The primary structure comprises 556 residues: 2-succinyl-5-enolpyruvyl-6-hydroxy-3-cyclohexene-1-carboxylate synthase (556 aa).

Belongs to the TPP enzyme family. MenD subfamily. In terms of assembly, homodimer. The cofactor is Mg(2+). Mn(2+) is required as a cofactor. Thiamine diphosphate serves as cofactor.

The catalysed reaction is isochorismate + 2-oxoglutarate + H(+) = 5-enolpyruvoyl-6-hydroxy-2-succinyl-cyclohex-3-ene-1-carboxylate + CO2. It participates in quinol/quinone metabolism; 1,4-dihydroxy-2-naphthoate biosynthesis; 1,4-dihydroxy-2-naphthoate from chorismate: step 2/7. It functions in the pathway quinol/quinone metabolism; menaquinone biosynthesis. Functionally, catalyzes the thiamine diphosphate-dependent decarboxylation of 2-oxoglutarate and the subsequent addition of the resulting succinic semialdehyde-thiamine pyrophosphate anion to isochorismate to yield 2-succinyl-5-enolpyruvyl-6-hydroxy-3-cyclohexene-1-carboxylate (SEPHCHC). The sequence is that of 2-succinyl-5-enolpyruvyl-6-hydroxy-3-cyclohexene-1-carboxylate synthase from Staphylococcus haemolyticus (strain JCSC1435).